Here is a 161-residue protein sequence, read N- to C-terminus: Bacterial E2-like ubiquitin protein BilB (161 aa).

Catalysis depends on C113, which acts as the Glycyl thioester intermediate.

Component of the Bil (bacterial ISG15-like) antiviral defense system, composed of BilA, BilB, BilC and BilD. The Bil system specifically conjugates a ubiquitin-like moiety (bilA) to the bacteriophage central tail fiber (CTF, or tip attachment protein J) via reactions involving E1 (bilD) and E2 (bilB). Modifies CTF of phage SECphi27 and SECphi4, which probably interferes with assembly of the phage tail. Also modifies T5 baseplate hub protein pb3 (gene D16), but not gp27 of phage T6 (Bil defends against T6). BilB probably accepts ubiquitin from the BilA-BilD (E1) complex and catalyzes its covalent attachment to target protein (CTF). Bil-encoding bacteria produce mostly defective phage SECphi27, many of which have phage assembly defects, including no tails. SECphi27 phage progeny produced in E.coli with the Bil system inject less DNA into naive host cells, maybe because the phage are less able to adsorb and inject their DNA into host cells. In terms of biological role, expression of the Bil system in E.coli (strain MG1655) confers about 100-fold resistance to phage SECphi27, SECphi18, SECphi6, SECphi4 and T5, but not to SECphi17. When cells expressing the Bil system are infected by phage SECphi27 at low multiplicity of infection (0.03 MOI) the culture survives, at 3.0 MOI the culture collapses at the same time as cells without the Bil system. This chain is Bacterial E2-like ubiquitin protein BilB, found in Collimonas sp. (strain OK412).